Reading from the N-terminus, the 361-residue chain is MKTRLGLVYGGKSAEHNVSLQTALAVTKALDTEKFDIHPIYITEKGEWVRGPQLTEPVSNVKMLQFEQTGQTFSPAVLNRDMFPGEADAKEDSIDVVFPLLHGPNGEDGTIQGMLELLNVPYVGNGVLASSAGMDKVVMKHLFAQAGLDQAKYVSFLKKTWSQSKEECYAQVEGELGYPCFVKPANLGSSVGISKCRSREELDQAFELAFQYDRKIVVEEGVIGREIELGVLGNDEPVCSVAGEIAPKKDFYDYKAKYEDGDTDLIIPASLTEDEYETMRSMAVKAFQAIDGSGLVRADFFLTNEGRVLINEVNTMPGFTPFSMFPLLWKQSGVEYAELIEKLVALAIERHEEKQQIKHTF.

An ATP-grasp domain is found at 140-345; the sequence is KHLFAQAGLD…YAELIEKLVA (206 aa). 173–228 contributes to the ATP binding site; sequence EGELGYPCFVKPANLGSSVGISKCRSREELDQAFELAFQYDRKIVVEEGVIGREIE. Mg(2+)-binding residues include D299, E312, and N314.

It belongs to the D-alanine--D-alanine ligase family. It depends on Mg(2+) as a cofactor. Mn(2+) is required as a cofactor.

Its subcellular location is the cytoplasm. The catalysed reaction is 2 D-alanine + ATP = D-alanyl-D-alanine + ADP + phosphate + H(+). The protein operates within cell wall biogenesis; peptidoglycan biosynthesis. In terms of biological role, cell wall formation. The protein is D-alanine--D-alanine ligase of Bacillus licheniformis (strain ATCC 14580 / DSM 13 / JCM 2505 / CCUG 7422 / NBRC 12200 / NCIMB 9375 / NCTC 10341 / NRRL NRS-1264 / Gibson 46).